Reading from the N-terminus, the 271-residue chain is MSTTVIGSWADAGDEFSAPDITTNPDGTKTVITYRTNQDGKKVKITQKIKEVKVQERVHPLIAQRKNWKKYGKESKSPPGPDTSTTQLGEKVELKLGTSWKQQEKEEEEEKAENRAQKLSVQTIRCRTCGGDHYTSKCPFKDTLGATTSSPAAESGAGDNGPGKYVPRHLRADANGNLPSKEGRDDSTTLKVSQLNSFVDEDMLRNELFARFGPLQRVTLVRNRETGDSRGFAYVSFITEDMAQRALDALNGKGYHSLILHLEWSKKKKTV.

3 disordered regions span residues 1 to 26, 63 to 119, and 147 to 187; these read MSTT…TNPD, AQRK…AQKL, and TTSS…RDDS. Serine 77 carries the phosphoserine modification. An RRM domain is found at 188-267; sequence TTLKVSQLNS…LILHLEWSKK (80 aa).

It belongs to the eIF-3 subunit G family. In terms of assembly, component of the eukaryotic translation initiation factor 3 (eIF-3) complex.

Its subcellular location is the cytoplasm. Functionally, RNA-binding component of the eukaryotic translation initiation factor 3 (eIF-3) complex, which is involved in protein synthesis of a specialized repertoire of mRNAs and, together with other initiation factors, stimulates binding of mRNA and methionyl-tRNAi to the 40S ribosome. The eIF-3 complex specifically targets and initiates translation of a subset of mRNAs involved in cell proliferation. This subunit can bind 18S rRNA. The sequence is that of Eukaryotic translation initiation factor 3 subunit G from Scheffersomyces stipitis (strain ATCC 58785 / CBS 6054 / NBRC 10063 / NRRL Y-11545) (Yeast).